Here is a 148-residue protein sequence, read N- to C-terminus: Large ribosomal subunit protein bL9 (148 aa).

It belongs to the bacterial ribosomal protein bL9 family.

Binds to the 23S rRNA. The protein is Large ribosomal subunit protein bL9 of Oceanobacillus iheyensis (strain DSM 14371 / CIP 107618 / JCM 11309 / KCTC 3954 / HTE831).